The sequence spans 400 residues: CinA-like protein (400 aa).

It belongs to the CinA family.

The protein is CinA-like protein of Escherichia coli O9:H4 (strain HS).